A 419-amino-acid chain; its full sequence is Isocitrate dehydrogenase [NADP] (419 aa).

T102 serves as a coordination point for NADP(+). The D-threo-isocitrate site is built by S111, N113, R117, R127, and R151. Mg(2+) is bound at residue D306. NADP(+) is bound by residues 338 to 344 (HGSAPKY), N351, Y390, and R394.

The protein belongs to the isocitrate and isopropylmalate dehydrogenases family. In terms of assembly, homodimer. Mg(2+) is required as a cofactor. Requires Mn(2+) as cofactor.

The enzyme catalyses D-threo-isocitrate + NADP(+) = 2-oxoglutarate + CO2 + NADPH. Its function is as follows. Catalyzes the oxidative decarboxylation of isocitrate to 2-oxoglutarate and carbon dioxide with the concomitant reduction of NADP(+). This chain is Isocitrate dehydrogenase [NADP], found in Haloferax volcanii (strain ATCC 29605 / DSM 3757 / JCM 8879 / NBRC 14742 / NCIMB 2012 / VKM B-1768 / DS2) (Halobacterium volcanii).